Consider the following 425-residue polypeptide: tRNA(Ile)-lysidine synthase (425 aa).

Residue 37-42 (SGGKDS) participates in ATP binding.

This sequence belongs to the tRNA(Ile)-lysidine synthase family.

Its subcellular location is the cytoplasm. It catalyses the reaction cytidine(34) in tRNA(Ile2) + L-lysine + ATP = lysidine(34) in tRNA(Ile2) + AMP + diphosphate + H(+). In terms of biological role, ligates lysine onto the cytidine present at position 34 of the AUA codon-specific tRNA(Ile) that contains the anticodon CAU, in an ATP-dependent manner. Cytidine is converted to lysidine, thus changing the amino acid specificity of the tRNA from methionine to isoleucine. The chain is tRNA(Ile)-lysidine synthase from Leptospira borgpetersenii serovar Hardjo-bovis (strain JB197).